A 137-amino-acid chain; its full sequence is Large ribosomal subunit protein eL28 (137 aa).

Position 2 is an N-acetylserine (Ser2). Glycyl lysine isopeptide (Lys-Gly) (interchain with G-Cter in SUMO2) cross-links involve residues Lys58 and Lys65. Ser115 bears the Phosphoserine mark.

Belongs to the eukaryotic ribosomal protein eL28 family. In terms of assembly, component of the large ribosomal subunit.

The protein localises to the cytoplasm. Component of the large ribosomal subunit. The ribosome is a large ribonucleoprotein complex responsible for the synthesis of proteins in the cell. In Mus musculus (Mouse), this protein is Large ribosomal subunit protein eL28 (Rpl28).